Here is a 139-residue protein sequence, read N- to C-terminus: Dehydrin DHN1 (139 aa).

Positions Met-1–His-139 are disordered. Residues Gly-23–Gly-42 are compositionally biased toward gly residues. A compositionally biased stretch (basic and acidic residues) spans Arg-49–Leu-58. Over residues Arg-59–Ser-68 the composition is skewed to low complexity. Over residues Lys-83–Ala-98 the composition is skewed to basic and acidic residues. The segment covering Ala-99 to Gly-109 has biased composition (low complexity). Over residues Thr-120 to His-139 the composition is skewed to basic and acidic residues.

This sequence belongs to the plant dehydrin family.

This is Dehydrin DHN1 (DHN1) from Hordeum vulgare (Barley).